The primary structure comprises 259 residues: NADPH-dependent reductase BacG (259 aa).

Residues 12–15 (SQGI), 34–36 (SRN), 62–63 (DM), I90, K113, and 185–191 (GFIATDR) each bind NADP(+).

It belongs to the short-chain dehydrogenases/reductases (SDR) family. In terms of assembly, homodimer.

The protein resides in the cytoplasm. It functions in the pathway antibiotic biosynthesis; bacilysin biosynthesis. Functionally, along with the bacABCDEF operon, BacG is involved in the biosynthesis of the nonribosomally synthesized dipeptide antibiotic bacilysin, composed of L-alanine and L-anticapsin. Bacilysin is an irreversible inactivator of the glutaminase domain of glucosamine synthetase. BacG catalyzes the stereoselective reduction of exocyclic-delta(3),delta(5)-dihydro-hydroxyphenylpyruvate (ex-H2HPP), adding a pro-S hydride equivalent to C4 position to yield tetrahydro-hydroxyphenylpyruvate (H4HPP). Although the 3Z,7R-ex-H2HPP isomer is kinetically disfavored by BacB and produced in a smaller quantity than 3E,7R-ex-H2HPP, it is the preferred substrate for the conjugate reduction reaction of BacG. The chain is NADPH-dependent reductase BacG from Bacillus subtilis (strain 168).